Here is a 457-residue protein sequence, read N- to C-terminus: Argininosuccinate lyase (457 aa).

It belongs to the lyase 1 family. Argininosuccinate lyase subfamily.

Its subcellular location is the cytoplasm. The catalysed reaction is 2-(N(omega)-L-arginino)succinate = fumarate + L-arginine. Its pathway is amino-acid biosynthesis; L-arginine biosynthesis; L-arginine from L-ornithine and carbamoyl phosphate: step 3/3. The sequence is that of Argininosuccinate lyase from Pectobacterium carotovorum subsp. carotovorum (strain PC1).